The chain runs to 694 residues: Elongation factor G (694 aa).

Positions 8-283 constitute a tr-type G domain; that stretch reads ERYRNIGIMA…AVIDYLPAPV (276 aa). GTP-binding positions include 17-24, 81-85, and 135-138; these read AHIDAGKT, DTPGH, and NKMD.

This sequence belongs to the TRAFAC class translation factor GTPase superfamily. Classic translation factor GTPase family. EF-G/EF-2 subfamily.

It is found in the cytoplasm. In terms of biological role, catalyzes the GTP-dependent ribosomal translocation step during translation elongation. During this step, the ribosome changes from the pre-translocational (PRE) to the post-translocational (POST) state as the newly formed A-site-bound peptidyl-tRNA and P-site-bound deacylated tRNA move to the P and E sites, respectively. Catalyzes the coordinated movement of the two tRNA molecules, the mRNA and conformational changes in the ribosome. This Paramagnetospirillum magneticum (strain ATCC 700264 / AMB-1) (Magnetospirillum magneticum) protein is Elongation factor G.